The sequence spans 795 residues: Myosin light chain kinase 3 (795 aa).

The residue at position 155 (Ser155) is a Phosphoserine. Disordered regions lie at residues Gly236–Asn257 and Ser305–Leu328. 2 positions are modified to phosphoserine: Ser351 and Ser432. Residues Asp367–Leu452 are disordered. The Protein kinase domain occupies Val491 to Leu746. Residues Leu497–Val505 and Lys520 contribute to the ATP site. Asp612 (proton acceptor) is an active-site residue.

Belongs to the protein kinase superfamily. CAMK Ser/Thr protein kinase family. Requires Mg(2+) as cofactor. Phosphorylated on serine residues. Restricted to cardiomyocytes (at protein level). Down-regulated in heart after experimental myocardial infarction at the protein level; no significant changes at the mRNA level.

The protein resides in the cytoplasm. The enzyme catalyses L-seryl-[myosin light chain] + ATP = O-phospho-L-seryl-[myosin light chain] + ADP + H(+). It carries out the reaction L-threonyl-[myosin light chain] + ATP = O-phospho-L-threonyl-[myosin light chain] + ADP + H(+). In terms of biological role, kinase that phosphorylates MYL2 in vitro. Has been proposed to be calmodulin-dependent, although MYL2 phosphorylation has also been observed in the presence or absence of calmodulin. Promotes sarcomere formation in cardiomyocytes and increases cardiomyocyte contractility. The polypeptide is Myosin light chain kinase 3 (Mylk3) (Mus musculus (Mouse)).